Reading from the N-terminus, the 666-residue chain is DNA mismatch repair protein MutL (666 aa).

The protein belongs to the DNA mismatch repair MutL/HexB family.

This protein is involved in the repair of mismatches in DNA. It is required for dam-dependent methyl-directed DNA mismatch repair. May act as a 'molecular matchmaker', a protein that promotes the formation of a stable complex between two or more DNA-binding proteins in an ATP-dependent manner without itself being part of a final effector complex. The chain is DNA mismatch repair protein MutL from Clostridium botulinum (strain Loch Maree / Type A3).